Consider the following 87-residue polypeptide: Putative defensin-like protein 235 (87 aa).

The N-terminal stretch at 1–26 (MRSATFFLVSCVLMSFVLSHVKEVEA) is a signal peptide. 3 cysteine pairs are disulfide-bonded: Cys-46–Cys-73, Cys-54–Cys-82, and Cys-71–Cys-84.

It belongs to the DEFL family.

The protein localises to the secreted. The protein is Putative defensin-like protein 235 (SCRL26) of Arabidopsis thaliana (Mouse-ear cress).